A 1181-amino-acid polypeptide reads, in one-letter code: HEAT repeat-containing protein 6 (1181 aa).

Residues 159 to 198 (PELLGNTGLLMKLSDLAQSDPEVRRAAVHCMANLCLSVPG) form an HEAT 1 repeat. 2 disordered regions span residues 292–347 (QYDG…PVTG) and 371–390 (LDGS…SSSS). Polar residues predominate over residues 300 to 312 (KPQQSESSASRPT). The span at 313 to 325 (LNKKKKSKVKPKK) shows a compositional bias: basic residues. A phosphoserine mark is found at Ser-336 and Ser-337. 2 positions are modified to phosphoserine: Ser-399 and Ser-402. HEAT repeat units follow at residues 452–490 (ELGS…GSKQ), 515–552 (SIRE…NAPY), and 558–595 (SLLT…THAP). The tract at residues 613-646 (NSNSATPHLSPPDWWKKAPAGPSLEETSVSSPKG) is disordered. At Thr-618 the chain carries Phosphothreonine. A compositionally biased stretch (polar residues) spans 637–646 (EETSVSSPKG). Ser-643 carries the phosphoserine modification.

Amplified in breast cancer cell lines MCF-7 and BT-474.

Its function is as follows. Amplification-dependent oncogene. The protein is HEAT repeat-containing protein 6 (HEATR6) of Homo sapiens (Human).